The chain runs to 437 residues: tRNA-2-methylthio-N(6)-dimethylallyladenosine synthase (437 aa).

Residues 1-117 (MKFYIKTFGC…LPNLLEEAKS (117 aa)) form the MTTase N-terminal domain. [4Fe-4S] cluster-binding residues include Cys-10, Cys-46, Cys-80, Cys-156, Cys-160, and Cys-163. Positions 142–371 (RENKYTAFVT…INLQKDITFK (230 aa)) constitute a Radical SAM core domain. Positions 374–435 (LEYQDKIVEI…RFSLEGSIIG (62 aa)) constitute a TRAM domain.

It belongs to the methylthiotransferase family. MiaB subfamily. Monomer. It depends on [4Fe-4S] cluster as a cofactor.

Its subcellular location is the cytoplasm. It catalyses the reaction N(6)-dimethylallyladenosine(37) in tRNA + (sulfur carrier)-SH + AH2 + 2 S-adenosyl-L-methionine = 2-methylsulfanyl-N(6)-dimethylallyladenosine(37) in tRNA + (sulfur carrier)-H + 5'-deoxyadenosine + L-methionine + A + S-adenosyl-L-homocysteine + 2 H(+). Its function is as follows. Catalyzes the methylthiolation of N6-(dimethylallyl)adenosine (i(6)A), leading to the formation of 2-methylthio-N6-(dimethylallyl)adenosine (ms(2)i(6)A) at position 37 in tRNAs that read codons beginning with uridine. The sequence is that of tRNA-2-methylthio-N(6)-dimethylallyladenosine synthase from Sulfurihydrogenibium sp. (strain YO3AOP1).